Here is a 40-residue protein sequence, read N- to C-terminus: Photosystem II reaction center protein J (40 aa).

A helical membrane pass occupies residues 8 to 28 (IPLWLVATVAGLAAIGVLGIF).

The protein belongs to the PsbJ family. As to quaternary structure, PSII is composed of 1 copy each of membrane proteins PsbA, PsbB, PsbC, PsbD, PsbE, PsbF, PsbH, PsbI, PsbJ, PsbK, PsbL, PsbM, PsbT, PsbX, PsbY, PsbZ, Psb30/Ycf12, at least 3 peripheral proteins of the oxygen-evolving complex and a large number of cofactors. It forms dimeric complexes.

It localises to the plastid. The protein localises to the cyanelle thylakoid membrane. Its function is as follows. One of the components of the core complex of photosystem II (PSII). PSII is a light-driven water:plastoquinone oxidoreductase that uses light energy to abstract electrons from H(2)O, generating O(2) and a proton gradient subsequently used for ATP formation. It consists of a core antenna complex that captures photons, and an electron transfer chain that converts photonic excitation into a charge separation. The sequence is that of Photosystem II reaction center protein J from Cyanophora paradoxa.